Reading from the N-terminus, the 726-residue chain is F-box protein COS111 (726 aa).

An F-box domain is found at 143 to 194; that stretch reads FADINCLPEEIICRIIANLNDADSQRNCLLVSQEWSECAKRIIYKDVKFTST. Positions 276 to 295 are disordered; the sequence is RSRTRRSSDASSMNSSVFSH. The segment covering 284–295 has biased composition (low complexity); that stretch reads DASSMNSSVFSH.

F-box protein probably involved in ubiquitin conjugation pathway. The chain is F-box protein COS111 (COS111) from Kluyveromyces lactis (strain ATCC 8585 / CBS 2359 / DSM 70799 / NBRC 1267 / NRRL Y-1140 / WM37) (Yeast).